The sequence spans 327 residues: PDZ and LIM domain protein 1 (327 aa).

An N-acetylthreonine modification is found at T2. The 83-residue stretch at 3 to 85 (TQQIVLQGPG…NMTLTVSRSE (83 aa)) folds into the PDZ domain. Phosphoserine occurs at positions 90 and 130. Y142 is subject to Phosphotyrosine. Residues 161-184 (VESKTSASGEEANSRPVVQPHPSG) are disordered. Residues 256–315 (PICDKCGTGIVGVFVKLRDHHRHPECYVCTDCGINLKQKGHFFVEDQIYCEKHARERVTP) form the LIM zinc-binding domain. C258, C261, H278, C281, C284, C287, C305, and H308 together coordinate Zn(2+). At T314 the chain carries Phosphothreonine. Y319 is modified (phosphotyrosine).

As to quaternary structure, interacts with ACTN1, ACTN2 and ACTN4. Interacts with PDLIM4. Expressed in heart, lung, spleen, testis and skeletal muscle.

The protein resides in the cytoplasm. It is found in the cytoskeleton. The protein localises to the myofibril. Its subcellular location is the sarcomere. It localises to the z line. Functionally, cytoskeletal protein that may act as an adapter that brings other proteins (like kinases) to the cytoskeleton. Involved in assembly, disassembly and directioning of stress fibers in fibroblasts. Required for the localization of ACTN1 and PALLD to stress fibers. Required for cell migration and in maintaining cell polarity of fibroblasts. This chain is PDZ and LIM domain protein 1 (Pdlim1), found in Mus musculus (Mouse).